A 254-amino-acid chain; its full sequence is Type III pantothenate kinase (254 aa).

Residue 7–14 participates in ATP binding; it reads DVGNTRLK. Residues Tyr96 and 103–106 each bind substrate; that span reads GSDR. The active-site Proton acceptor is the Asp105. Position 133 (Thr133) interacts with ATP. A substrate-binding site is contributed by Thr183.

It belongs to the type III pantothenate kinase family. In terms of assembly, homodimer. It depends on NH4(+) as a cofactor. Requires K(+) as cofactor.

It localises to the cytoplasm. The enzyme catalyses (R)-pantothenate + ATP = (R)-4'-phosphopantothenate + ADP + H(+). Its pathway is cofactor biosynthesis; coenzyme A biosynthesis; CoA from (R)-pantothenate: step 1/5. Functionally, catalyzes the phosphorylation of pantothenate (Pan), the first step in CoA biosynthesis. The protein is Type III pantothenate kinase of Paracidovorax citrulli (strain AAC00-1) (Acidovorax citrulli).